The primary structure comprises 314 residues: 2,3-dihydroxyphenylpropionate/2,3-dihydroxicinnamic acid 1,2-dioxygenase (314 aa).

His-115 acts as the Proton donor in catalysis. His-179 (proton acceptor) is an active-site residue.

Belongs to the LigB/MhpB extradiol dioxygenase family. Homotetramer. It depends on Fe(2+) as a cofactor.

It catalyses the reaction 3-(2,3-dihydroxyphenyl)propanoate + O2 = (2Z,4E)-2-hydroxy-6-oxonona-2,4-dienedioate + H(+). It carries out the reaction (2E)-3-(2,3-dihydroxyphenyl)prop-2-enoate + O2 = (2Z,4E,7E)-2-hydroxy-6-oxonona-2,4,7-trienedioate + H(+). Its pathway is aromatic compound metabolism; 3-phenylpropanoate degradation. In terms of biological role, catalyzes the non-heme iron(II)-dependent oxidative cleavage of 2,3-dihydroxyphenylpropionic acid and 2,3-dihydroxicinnamic acid into 2-hydroxy-6-ketononadienedioate and 2-hydroxy-6-ketononatrienedioate, respectively. The sequence is that of 2,3-dihydroxyphenylpropionate/2,3-dihydroxicinnamic acid 1,2-dioxygenase from Cupriavidus pinatubonensis (strain JMP 134 / LMG 1197) (Cupriavidus necator (strain JMP 134)).